Reading from the N-terminus, the 310-residue chain is Transcription factor LRL2 (310 aa).

Composition is skewed to low complexity over residues 1-20 (MNSS…LQSP) and 104-126 (QTQT…QPQT). 2 disordered regions span residues 1 to 23 (MNSS…PATF) and 95 to 143 (FHLP…PHSI). A basic motif; degenerate region spans residues 136-149 (QATDPHSIAERLRR). A bHLH domain is found at 136-185 (QATDPHSIAERLRRERIAERMKSLQELVPNGNKTDKASMLDEIIDYVKFL). Residues 150–185 (ERIAERMKSLQELVPNGNKTDKASMLDEIIDYVKFL) are helix-loop-helix motif. Positions 203 to 225 (ASSQISEDAGGSHENTSSSGEAK) are disordered.

As to quaternary structure, homodimer. As to expression, expressed constitutively in roots, leaves, stems, and flowers.

The protein localises to the nucleus. In terms of biological role, transcription factor that regulates the development of root hairs. Transcription factor that regulates the development of sperm cells. The sequence is that of Transcription factor LRL2 from Arabidopsis thaliana (Mouse-ear cress).